Here is a 573-residue protein sequence, read N- to C-terminus: Squalene monooxygenase (573 aa).

Over 1–19 the chain is Cytoplasmic; the sequence is MWTFLGIATFTYFYKKCGD. Positions 1 to 99 are interaction with MARCHF6; that stretch reads MWTFLGIATF…EQLESKRRRK (99 aa). The stretch at 20 to 40 is an intramembrane region; it reads VTLANKELLLCVLVFLSLGLV. Residues 41 to 573 lie on the Cytoplasmic side of the membrane; the sequence is LSYRCRHRNG…IYSEMKYLVH (533 aa). The required for degradation in response to high membrane cholesterol levels stretch occupies residues 61-72; the sequence is QFAAFSDILSAL. The segment at 100 to 573 is sufficient for catalytic activity; sequence EVNLSETTLT…IYSEMKYLVH (474 aa). FAD contacts are provided by residues 132–133, 152–153, Arg-160, Arg-233, Val-249, Asp-407, and Met-420; these read VL and ER. Positions 515-573 are hydrophobic; mediates interaction with membranes; it reads PLLLIRHFFSVAVYATYFCFKSEPWATKPRALFSSGAILYKACSIIFPLIYSEMKYLVH.

The protein belongs to the squalene monooxygenase family. Interacts (via N-terminal domain) with MARCHF6. Interacts with SMIM22; this interaction modulates lipid droplet formation. FAD is required as a cofactor. Ubiquitinated by MARCHF6 in response to high cholesterol levels in intracellular membranes, leading to proteasomal degradation. In terms of tissue distribution, detected in lever (at protein level).

The protein resides in the microsome membrane. It localises to the endoplasmic reticulum membrane. The enzyme catalyses squalene + reduced [NADPH--hemoprotein reductase] + O2 = (S)-2,3-epoxysqualene + oxidized [NADPH--hemoprotein reductase] + H2O + H(+). It functions in the pathway terpene metabolism; lanosterol biosynthesis; lanosterol from farnesyl diphosphate: step 2/3. Its activity is regulated as follows. Inhibited by NB-598 ((E)N-ethyl-N-(6,6-dimethyl-2-hepten-4-ynyl)-3-[(3,3'-bi-thiophen-5-yl)methoxy]benzene-methanamine). Contrary to fungal enzymes, the mammalian enzyme is only slightly inhibited by terbinafine. In terms of biological role, catalyzes the stereospecific oxidation of squalene to (S)-2,3-epoxysqualene, and is considered to be a rate-limiting enzyme in steroid biosynthesis. The protein is Squalene monooxygenase (Sqle) of Rattus norvegicus (Rat).